Here is a 99-residue protein sequence, read N- to C-terminus: MEPQKLLIIGFLLCSLTCLLLETVASSPLPLSALGIQEKTGSKPRSGGNHRSWLNNFRDYLWQLIKSALPPAAIVAFLLTSALMGILCCFTILVVDPVH.

The N-terminal stretch at 1-26 is a signal peptide; it reads MEPQKLLIIGFLLCSLTCLLLETVAS. The Extracellular portion of the chain corresponds to 27 to 73; that stretch reads SPLPLSALGIQEKTGSKPRSGGNHRSWLNNFRDYLWQLIKSALPPAA. The chain crosses the membrane as a helical span at residues 74–94; sequence IVAFLLTSALMGILCCFTILV. The Cytoplasmic portion of the chain corresponds to 95–99; the sequence is VDPVH.

It is found in the cell membrane. The protein is Small integral membrane protein 9 (SMIM9) of Homo sapiens (Human).